A 931-amino-acid polypeptide reads, in one-letter code: Bifunctional uridylyltransferase/uridylyl-removing enzyme (931 aa).

The uridylyltransferase stretch occupies residues 1–383 (MDSVATDSKA…TTGSTWRRVP (383 aa)). The tract at residues 384 to 739 (ESDDFIVDNN…VGFDPARGVT (356 aa)) is uridylyl-removing. The HD domain occupies 499 to 622 (VDEHLIRCIG…VQSVEQMKLL (124 aa)). 2 ACT domains span residues 740–822 (ELTI…AVAR) and 851–931 (VIEV…QPAA).

It belongs to the GlnD family. Mg(2+) serves as cofactor.

The catalysed reaction is [protein-PII]-L-tyrosine + UTP = [protein-PII]-uridylyl-L-tyrosine + diphosphate. It carries out the reaction [protein-PII]-uridylyl-L-tyrosine + H2O = [protein-PII]-L-tyrosine + UMP + H(+). With respect to regulation, uridylyltransferase (UTase) activity is inhibited by glutamine, while glutamine activates uridylyl-removing (UR) activity. Functionally, modifies, by uridylylation and deuridylylation, the PII regulatory proteins (GlnB and homologs), in response to the nitrogen status of the cell that GlnD senses through the glutamine level. Under low glutamine levels, catalyzes the conversion of the PII proteins and UTP to PII-UMP and PPi, while under higher glutamine levels, GlnD hydrolyzes PII-UMP to PII and UMP (deuridylylation). Thus, controls uridylylation state and activity of the PII proteins, and plays an important role in the regulation of nitrogen fixation and metabolism. The polypeptide is Bifunctional uridylyltransferase/uridylyl-removing enzyme (Bradyrhizobium sp. (strain ORS 278)).